Here is a 685-residue protein sequence, read N- to C-terminus: Exocyst complex component 8 (685 aa).

The PH domain occupies 151 to 251 (YLVYNGDLTE…WLEILEQTKK (101 aa)). Residues 254 to 263 (ALNEKQKQEE) are compositionally biased toward basic and acidic residues. Residues 254–273 (ALNEKQKQEETTPQLPVVPE) form a disordered region.

Belongs to the EXO84 family. As to quaternary structure, the exocyst complex is composed of exoc1, exoc2, exoc3, exoc4, exoc5, exoc6, exoc7 and exoc8.

The protein resides in the cytoplasm. Its subcellular location is the perinuclear region. It localises to the cell projection. It is found in the growth cone. Its function is as follows. Component of the exocyst complex involved in the docking of exocytic vesicles with fusion sites on the plasma membrane. The protein is Exocyst complex component 8 (exoc8) of Xenopus laevis (African clawed frog).